We begin with the raw amino-acid sequence, 360 residues long: Phospho-N-acetylmuramoyl-pentapeptide-transferase (360 aa).

Helical transmembrane passes span Ile-27–Leu-47, Thr-73–Leu-93, Tyr-97–Tyr-117, Ala-145–Phe-165, Val-168–Ser-188, Gly-199–Thr-219, Ser-236–Phe-256, Ile-263–Ile-283, Leu-288–Val-308, and Lys-337–Leu-357.

Belongs to the glycosyltransferase 4 family. MraY subfamily. It depends on Mg(2+) as a cofactor.

The protein resides in the cell inner membrane. The catalysed reaction is UDP-N-acetyl-alpha-D-muramoyl-L-alanyl-gamma-D-glutamyl-meso-2,6-diaminopimeloyl-D-alanyl-D-alanine + di-trans,octa-cis-undecaprenyl phosphate = di-trans,octa-cis-undecaprenyl diphospho-N-acetyl-alpha-D-muramoyl-L-alanyl-D-glutamyl-meso-2,6-diaminopimeloyl-D-alanyl-D-alanine + UMP. It functions in the pathway cell wall biogenesis; peptidoglycan biosynthesis. Functionally, catalyzes the initial step of the lipid cycle reactions in the biosynthesis of the cell wall peptidoglycan: transfers peptidoglycan precursor phospho-MurNAc-pentapeptide from UDP-MurNAc-pentapeptide onto the lipid carrier undecaprenyl phosphate, yielding undecaprenyl-pyrophosphoryl-MurNAc-pentapeptide, known as lipid I. In Marinomonas sp. (strain MWYL1), this protein is Phospho-N-acetylmuramoyl-pentapeptide-transferase.